The sequence spans 514 residues: Cytochrome P450 monooxygenase FUS8 (514 aa).

A helical transmembrane segment spans residues Leu28 to Phe48. N-linked (GlcNAc...) asparagine glycans are attached at residues Asn225 and Asn443. Cys460 is a binding site for heme.

Belongs to the cytochrome P450 family. Heme serves as cofactor.

The protein resides in the membrane. The protein operates within mycotoxin biosynthesis. Functionally, cytochrome P450 monooxygenase; part of the gene cluster that mediates the biosynthesis of the mycotoxin fusarin C. Within the cluster, FUS1, FUS2, FUS8 and FUS9 are sufficient for fusarin production. The roles of the other FUS members are yet undetermined. The fusarin C synthetase FUS1 is responsible for the condensation of one acetyl-coenzyme A (CoA) unit with six malonyl-CoA units and the amide linkage of the arising heptaketide and homoserine, subsequently releasing the first intermediate, prefusarin, as an alcohol with an open ring structure. The cytochrome P450 monooxygenase FUS8 participates in multiple oxidation processes at carbon C-20 and is able to use the FUS1 product as substrate, resulting in formation of 20-hydroxy-prefusarin. This reaction seems to be essential before the 2-pyrrolidone ring closure can be catalyzed by FUS2, generating 20-hydroxy-fusarin. FUS8 is able to further oxidizes carbon C-20 after ring closure, resulting in the formation of carboxy-fusarin C. As the last step, FUS9 methylates the hydroxyl group at C-21 to generate fusarin C. Fusarin C can then rearrange to epi-fusarin C, the (z)-isomers, and fusarin A and fusarin D. The sequence is that of Cytochrome P450 monooxygenase FUS8 from Gibberella moniliformis (strain M3125 / FGSC 7600) (Maize ear and stalk rot fungus).